Reading from the N-terminus, the 426-residue chain is Probable M18 family aminopeptidase 2 (426 aa).

The Zn(2+) site is built by histidine 79, histidine 156, and histidine 399.

It belongs to the peptidase M18 family. The cofactor is Zn(2+).

This Mycobacterium leprae (strain TN) protein is Probable M18 family aminopeptidase 2 (apeB).